A 321-amino-acid chain; its full sequence is tRNA dimethylallyltransferase (321 aa).

24-31 (GPTASGKS) is an ATP binding site. 26–31 (TASGKS) serves as a coordination point for substrate. Interaction with substrate tRNA stretches follow at residues 49-52 (DSMQ) and 172-176 (QRIVR).

This sequence belongs to the IPP transferase family. As to quaternary structure, monomer. It depends on Mg(2+) as a cofactor.

The enzyme catalyses adenosine(37) in tRNA + dimethylallyl diphosphate = N(6)-dimethylallyladenosine(37) in tRNA + diphosphate. Its function is as follows. Catalyzes the transfer of a dimethylallyl group onto the adenine at position 37 in tRNAs that read codons beginning with uridine, leading to the formation of N6-(dimethylallyl)adenosine (i(6)A). In Mesorhizobium japonicum (strain LMG 29417 / CECT 9101 / MAFF 303099) (Mesorhizobium loti (strain MAFF 303099)), this protein is tRNA dimethylallyltransferase.